The sequence spans 262 residues: Oxidoreductase AgnL4 (262 aa).

It belongs to the avfA family.

It participates in secondary metabolite biosynthesis. In terms of biological role, oxidoreductase; part of the gene cluster that mediates the biosynthesis of agnestins, dihydroxy-xanthone metabolites. The pathway begins with the assembly and cyclization of atrochrysone thioester by the non-reducing polyketide synthase Agnpks1. The atrochrysone carboxyl ACP thioesterase AgnL7 then breaks the thioester bond and releases the atrochrysone carboxylic acid as the first enzyme-free intermediate. The decarboxylase AgnL1 then catalyzes the concerted decarboxylation-elimination required to convert atochrysone carboxylic acid into emodin anthrone, which is further oxidized to emodin by the anthrone oxygenase AgnL2. Emodin then undergoes reduction catalyzed by the oxidoreductase AgnL4 to yield the dihydroquinone tautomer which is the substrate for reduction by the short chain dehydrogenase AgnL6 reduction to produce hydroxyketone, followed by AgnL8 dehydration and likely spontaneous autoxidation to chrysophanol. Baeyer-Villiger oxidation by the oxidase AgnL3 leads to monodictyphenone via cleavage of the C-10/C-10a bond of chrysophanol. Alternative cleavage at the C-4a/C-10 bond of chrysophanol also leads to the formation some cephalone F. Further conversion to agnestins A and B, requires reduction to dihydro-monodictyphenone, oxidation to agnestin C probably via an epoxide, and rearrangement to either agnestin A or agnestin B directly, although agnestin A or agnestin B can also interconvert. Within the cluster, AgnR1 is the only unassigned oxidoreductase present which could be involved in this conversion. However, AgnR1 seems not to be involved in this step, and thus genes involved in the proposed oxidation/reduction may be located elsewhere on the genome. Further agnestin A derivatives are probably formed by spontaneous decarboxylations, dehydrations and methanolysis reactions. The sequence is that of Oxidoreductase AgnL4 from Paecilomyces divaricatus (Penicillium divaricatum).